The sequence spans 521 residues: MEDFKIDLQLPERSQQHNFIYPLLFQEYIYALVNDRDLKRSISFANIGYEKKFRFQIVKRLINRMYKQIHWTTYFSNYSNKRKIYGLIKSLYYKLLSAGFSFLFEIPFSFKFISERKKILKSQNLRSILSIFPFFEDNFSHLKYVLDLLIPNPPHPEILVQKIRSWVQDASSLHLLQFFLQEFCSVKSLITTNKSKRNERFLFLLYNSYVCEYESFFLFLRNQSLHLGSISFVTLFERNIFYGKIECFVELFVQDSQANLRLFKDPDPSMHYARYCGKSILASNGGLLLMPKWQYYIVNFWQCYFYLWFDTERINLSQIASHPFYLMDYISSIAQTPSMVRSKMLENSFLIKNDMKIFDTFVPIIPIIGSLAKAKFCNLLGNPISKPVWSDFSDSDIIERFGRICRNLFHYYSGSSKKRSLYQIKYILRLSCARTLARKHKSTVRAFLQSLGPKFLEKFFTSEEQIIFLTFPNASFNLRGVSKGRIWYFDIVCINEQANFHVDSKFELKGYPRLKPCAMKN.

Belongs to the intron maturase 2 family. MatK subfamily.

It is found in the plastid. Functionally, usually encoded in the trnK tRNA gene intron. Probably assists in splicing its own and other chloroplast group II introns. The chain is Maturase K from Cuscuta exaltata (Tall dodder).